Here is a 97-residue protein sequence, read N- to C-terminus: Protein C4 (97 aa).

Disordered stretches follow at residues 1–31 (MGLL…PHTG) and 75–97 (ANLP…PSIY). Gly2 carries N-myristoyl glycine; by host lipidation. A compositionally biased stretch (polar residues) spans 77 to 88 (LPTTHMPRQSIQ).

Belongs to the geminiviridae protein AC4/C4 family.

The protein resides in the host cell membrane. Pathogenicity determinant. May act as a suppressor of RNA-mediated gene silencing, also known as post-transcriptional gene silencing (PTGS), a mechanism of plant viral defense that limits the accumulation of viral RNAs. The protein is Protein C4 of Tomato yellow leaf curl China virus (TYLCCNV).